Here is a 577-residue protein sequence, read N- to C-terminus: Torulene dioxygenase (577 aa).

Fe(2+) is bound by residues histidine 239, histidine 291, histidine 361, and histidine 570.

The protein belongs to the carotenoid oxygenase family. Requires Fe(2+) as cofactor.

It is found in the cytoplasm. It localises to the cytosol. It carries out the reaction torulene + O2 = 4'-apo-beta-carotenal + 3-methyl-2-butenal. It functions in the pathway carotenoid biosynthesis. In terms of biological role, torulene dioxygenase; part of the pathway that mediates the biosynthesis of neurosporaxanthin, a carboxylic apocarotenoid acting as an essential protective pigments and leading to orange pigmentation. CarT mediates the cleavage of torulene into beta-apo-4'-carotenal, the aldehyde corresponding to the acidic neurosporaxanthin. Is also active on other monocyclic synthetic substrates such as beta-apo-8'-carotenal and beta-apo-10'-carotenal to produce beta-apo-14'-carotenal and retinal(beta-apo-15'-carotenal), respectively. Neurosporaxanthin is synthesized from geranyl-geranyl pyrophosphate (GGPP) through several enzymatic activities. Phytoene synthase activity performed by the bifunctional enzyme carAR first produces phytoene from geranyl-geranyl pyrophosphate (GGPP). The phytoene dehydrogenase carB then introduces 4 desaturations to lead to lycopene which is substrate of the carotene cyclase activity of carAR that leads to the production of gamma-carotene. CarB then performs a 5th desaturation reaction to yield torulene. Torulene is the substrate of the dioxidase carT that breaks the molecule, removing five carbon atoms to yield beta-apo-4'-carotenal, whereas the aldehyde dehydrogenase carD mediates the last step by converting beta-apo-4'-carotenal into neurosporaxanthin. The protein is Torulene dioxygenase of Fusarium fujikuroi (Bakanae and foot rot disease fungus).